Consider the following 252-residue polypeptide: 5'-nucleotidase SurE (252 aa).

4 residues coordinate a divalent metal cation: Asp-8, Asp-9, Ser-39, and Asn-95.

Belongs to the SurE nucleotidase family. A divalent metal cation is required as a cofactor.

The protein resides in the cytoplasm. The enzyme catalyses a ribonucleoside 5'-phosphate + H2O = a ribonucleoside + phosphate. Its function is as follows. Nucleotidase that shows phosphatase activity on nucleoside 5'-monophosphates. The polypeptide is 5'-nucleotidase SurE (Thermoanaerobacter sp. (strain X514)).